Reading from the N-terminus, the 167-residue chain is Large ribosomal subunit protein uL22 (167 aa).

Residues G120 to R167 are disordered. Over residues K134–R167 the composition is skewed to basic residues.

It belongs to the universal ribosomal protein uL22 family. As to quaternary structure, part of the 50S ribosomal subunit.

Its function is as follows. This protein binds specifically to 23S rRNA; its binding is stimulated by other ribosomal proteins, e.g. L4, L17, and L20. It is important during the early stages of 50S assembly. It makes multiple contacts with different domains of the 23S rRNA in the assembled 50S subunit and ribosome. Functionally, the globular domain of the protein is located near the polypeptide exit tunnel on the outside of the subunit, while an extended beta-hairpin is found that lines the wall of the exit tunnel in the center of the 70S ribosome. The sequence is that of Large ribosomal subunit protein uL22 from Koribacter versatilis (strain Ellin345).